The chain runs to 151 residues: Putative olfactory receptor 13C6 (151 aa).

Topologically, residues M1–T27 are extracellular. N-linked (GlcNAc...) asparagine glycosylation is present at N5. The helical transmembrane segment at F28–L48 threads the bilayer. Residues M49–Y61 are Cytoplasmic-facing. Residues F62 to I82 traverse the membrane as a helical segment. Over L83 to V100 the chain is Extracellular. A helical transmembrane segment spans residues Q101 to F121.

It belongs to the G-protein coupled receptor 1 family.

Its subcellular location is the cell membrane. In terms of biological role, odorant receptor. The sequence is that of Putative olfactory receptor 13C6 from Homo sapiens (Human).